We begin with the raw amino-acid sequence, 212 residues long: uncharacterized protein (212 aa).

The S-adenosyl-L-methionine site is built by Gly53, Glu74, and Asp97.

Belongs to the methyltransferase superfamily. YrrT family.

Functionally, could be a S-adenosyl-L-methionine-dependent methyltransferase. This is an uncharacterized protein from Bacillus cereus (strain 03BB102).